The chain runs to 252 residues: Chitooligosaccharide deacetylase (252 aa).

Mg(2+) is bound by residues His61 and His125.

Belongs to the YdjC deacetylase family. ChbG subfamily. As to quaternary structure, homodimer. Mg(2+) serves as cofactor.

It localises to the cytoplasm. It catalyses the reaction N,N'-diacetylchitobiose + H2O = N-acetyl-beta-D-glucosaminyl-(1-&gt;4)-D-glucosamine + acetate. The enzyme catalyses diacetylchitobiose-6'-phosphate + H2O = N'-monoacetylchitobiose-6'-phosphate + acetate. The protein operates within glycan degradation; chitin degradation. Involved in the degradation of chitin. ChbG is essential for growth on the acetylated chitooligosaccharides chitobiose and chitotriose but is dispensable for growth on cellobiose and chitosan dimer, the deacetylated form of chitobiose. Deacetylation of chitobiose-6-P and chitotriose-6-P is necessary for both the activation of the chb promoter by the regulatory protein ChbR and the hydrolysis of phosphorylated beta-glucosides by the phospho-beta-glucosidase ChbF. Catalyzes the removal of only one acetyl group from chitobiose-6-P to yield monoacetylchitobiose-6-P, the inducer of ChbR and the substrate of ChbF. In Salmonella paratyphi B (strain ATCC BAA-1250 / SPB7), this protein is Chitooligosaccharide deacetylase.